Consider the following 231-residue polypeptide: ATP-dependent dethiobiotin synthetase BioD (231 aa).

12–17 (EVGKTV) contacts ATP. Residue Thr-16 participates in Mg(2+) binding. Residue Lys-37 is part of the active site. Position 41 (Ser-41) interacts with substrate. Residues Asp-51, 112-115 (EGAG), and 202-204 (PKL) each bind ATP. Mg(2+) contacts are provided by Asp-51 and Glu-112.

Belongs to the dethiobiotin synthetase family. In terms of assembly, homodimer. Mg(2+) is required as a cofactor.

The protein localises to the cytoplasm. It carries out the reaction (7R,8S)-7,8-diammoniononanoate + CO2 + ATP = (4R,5S)-dethiobiotin + ADP + phosphate + 3 H(+). It participates in cofactor biosynthesis; biotin biosynthesis; biotin from 7,8-diaminononanoate: step 1/2. Functionally, catalyzes a mechanistically unusual reaction, the ATP-dependent insertion of CO2 between the N7 and N8 nitrogen atoms of 7,8-diaminopelargonic acid (DAPA, also called 7,8-diammoniononanoate) to form a ureido ring. This Bacillus subtilis subsp. natto protein is ATP-dependent dethiobiotin synthetase BioD.